Consider the following 255-residue polypeptide: tRNA (guanine-N(1)-)-methyltransferase (255 aa).

S-adenosyl-L-methionine-binding positions include Gly113 and 133–138 (IGDYVL).

It belongs to the RNA methyltransferase TrmD family. In terms of assembly, homodimer.

It localises to the cytoplasm. It catalyses the reaction guanosine(37) in tRNA + S-adenosyl-L-methionine = N(1)-methylguanosine(37) in tRNA + S-adenosyl-L-homocysteine + H(+). Specifically methylates guanosine-37 in various tRNAs. This chain is tRNA (guanine-N(1)-)-methyltransferase, found in Chloroflexus aggregans (strain MD-66 / DSM 9485).